The chain runs to 66 residues: Photosystem II reaction center protein J (66 aa).

Residues 37-57 (LWLVATAGGMAVIFVVGLFFY) form a helical membrane-spanning segment.

Belongs to the PsbJ family. PSII is composed of 1 copy each of membrane proteins PsbA, PsbB, PsbC, PsbD, PsbE, PsbF, PsbH, PsbI, PsbJ, PsbK, PsbL, PsbM, PsbT, PsbX, PsbY, PsbZ, Psb30/Ycf12, peripheral proteins PsbO, CyanoQ (PsbQ), PsbU, PsbV and a large number of cofactors. It forms dimeric complexes.

It is found in the cellular thylakoid membrane. Its function is as follows. One of the components of the core complex of photosystem II (PSII). PSII is a light-driven water:plastoquinone oxidoreductase that uses light energy to abstract electrons from H(2)O, generating O(2) and a proton gradient subsequently used for ATP formation. It consists of a core antenna complex that captures photons, and an electron transfer chain that converts photonic excitation into a charge separation. This Synechococcus sp. (strain CC9311) protein is Photosystem II reaction center protein J.